A 185-amino-acid chain; its full sequence is Large ribosomal subunit protein uL16m (185 aa).

The protein belongs to the universal ribosomal protein uL16 family.

The protein localises to the mitochondrion. In Oryza sativa subsp. japonica (Rice), this protein is Large ribosomal subunit protein uL16m (RPL16).